The chain runs to 207 residues: MSRYRGPRLKIIRRLRNLPGLTNKLVESKKNQASGSDQSIQKKVSQYCIRLEAKQRLRFNYGLTERQLLNYVRIARCAKGSTGQILLQLLEMRLDNILFRLGVVPTIPSARQLINHRHILVNDRIVDVPSFHCKPKDIITIGAPKIYQSIITKRIESFAKDQIPDHLTLSLSEPKKPKGFVNYLINRESIGLKINELLVVEYYSRKA.

Positions 92 to 153 (MRLDNILFRL…PKIYQSIITK (62 aa)) constitute an S4 RNA-binding domain.

It belongs to the universal ribosomal protein uS4 family. In terms of assembly, part of the 30S ribosomal subunit. Contacts protein S5. The interaction surface between S4 and S5 is involved in control of translational fidelity.

It is found in the plastid. It localises to the chloroplast. In terms of biological role, one of the primary rRNA binding proteins, it binds directly to 16S rRNA where it nucleates assembly of the body of the 30S subunit. With S5 and S12 plays an important role in translational accuracy. This Equisetum bogotense (Horsetail) protein is Small ribosomal subunit protein uS4c (rps4).